Consider the following 87-residue polypeptide: MRLILSLPVLAVVLAMVLEGPAPAQADPHISSSLESIPGKLKEFGSTVEEKFRTAIDHIKKSEFSEKTQNWFSELFHKVKEKFETTF.

The signal sequence occupies residues M1 to A26.

This sequence belongs to the apolipoprotein C1 family.

It localises to the secreted. In terms of biological role, inhibitor of lipoprotein binding to the low density lipoprotein (LDL) receptor, LDL receptor-related protein, and very low density lipoprotein (VLDL) receptor. Associates with high density lipoproteins (HDL) and the triacylglycerol-rich lipoproteins in the plasma and makes up about 10% of the protein of the VLDL and 2% of that of HDL. Appears to interfere directly with fatty acid uptake and is also the major plasma inhibitor of cholesteryl ester transfer protein (CETP). Binds free fatty acids and reduces their intracellular esterification. Modulates the interaction of APOE with beta-migrating VLDL and inhibits binding of beta-VLDL to the LDL receptor-related protein. This chain is Apolipoprotein C-I (APOC1), found in Pteropus vampyrus (Large flying fox).